Consider the following 302-residue polypeptide: Cyclin-dependent kinase 1-B (302 aa).

Residues tyrosine 4–phenylalanine 287 form the Protein kinase domain. ATP-binding positions include isoleucine 10–valine 18 and lysine 33. At threonine 14 the chain carries Phosphothreonine. The residue at position 15 (tyrosine 15) is a Phosphotyrosine; by wee1 and wee2. Aspartate 128 functions as the Proton acceptor in the catalytic mechanism. Threonine 161 carries the phosphothreonine; by cak modification. Serine 277 is modified (phosphoserine).

The protein belongs to the protein kinase superfamily. CMGC Ser/Thr protein kinase family. CDC2/CDKX subfamily. In terms of assembly, forms a stable but non-covalent complex with a regulatory subunit and with a cyclin. Interacts with spdya. Post-translationally, phosphorylation at Tyr-15 by wee1 and wee2 inhibits the protein kinase activity and acts negative regulator of entry into mitosis (G2 to M transition).

It localises to the nucleus. It catalyses the reaction L-seryl-[protein] + ATP = O-phospho-L-seryl-[protein] + ADP + H(+). The enzyme catalyses L-threonyl-[protein] + ATP = O-phospho-L-threonyl-[protein] + ADP + H(+). It carries out the reaction [DNA-directed RNA polymerase] + ATP = phospho-[DNA-directed RNA polymerase] + ADP + H(+). With respect to regulation, phosphorylation at Thr-14 or Tyr-15 inactivates the enzyme, while phosphorylation at Thr-161 activates it. In terms of biological role, plays a key role in the control of the eukaryotic cell cycle by modulating the centrosome cycle as well as mitotic onset; promotes G2-M transition via association with multiple interphase cyclins. During G2 and early mitosis, CDC25A/B/C-mediated dephosphorylation activates CDK1/cyclin complexes which phosphorylate several substrates that trigger at least centrosome separation, Golgi dynamics, nuclear envelope breakdown and chromosome condensation. Once chromosomes are condensed and aligned at the metaphase plate, CDK1 activity is switched off by WEE1- and PKMYT1-mediated phosphorylation to allow sister chromatid separation, chromosome decondensation, reformation of the nuclear envelope and cytokinesis. Catalyzes lamin (LMNA, LMNB1 and LMNB2) phosphorylation at the onset of mitosis, promoting nuclear envelope breakdown. This is Cyclin-dependent kinase 1-B (cdk1-b) from Xenopus laevis (African clawed frog).